The chain runs to 111 residues: PHD finger-like domain-containing protein 5A (111 aa).

This sequence belongs to the PHF5 family.

In Drosophila melanogaster (Fruit fly), this protein is PHD finger-like domain-containing protein 5A.